The chain runs to 352 residues: uncharacterized protein (352 aa).

Positions 285-352 (FQHLRNARER…IKSEIRRLQR (68 aa)) form a coiled coil.

This is an uncharacterized protein from Emericella nidulans (strain FGSC A4 / ATCC 38163 / CBS 112.46 / NRRL 194 / M139) (Aspergillus nidulans).